The sequence spans 361 residues: Cysteine-rich with EGF-like domain protein 2-B (361 aa).

The signal sequence occupies residues 1–24; that stretch reads MNGSRAWRLAAWLLLCLSCSAAVA. The EGF-like 1 domain occupies 134 to 176; that stretch reads DCLACLGGSERPCHGNGFCSGDGTRSGDGSCRCKAEYTGSFCL. Disulfide bonds link Cys138–Cys152, Cys146–Cys164, and Cys166–Cys175. N-linked (GlcNAc...) asparagine glycosylation occurs at Asn188. FU repeat units follow at residues 191 to 238 and 251 to 298; these read HAVC…EESP and SFLC…SEKL. The 42-residue stretch at 288–329 folds into the EGF-like 2; calcium-binding domain; the sequence is DVDECDASEKLCLRENEVCLNTAGSYKCTCSEGFEDKEGNCV. Cystine bridges form between Cys292–Cys306, Cys299–Cys315, and Cys317–Cys328. The disordered stretch occupies residues 339 to 361; the sequence is ITEGETGTPASDTNILNTAHEDL. Residues 346–355 show a composition bias toward polar residues; the sequence is TPASDTNILN.

This sequence belongs to the CRELD family.

The protein localises to the secreted. It localises to the endoplasmic reticulum. In terms of biological role, possible role in neuronal acetylcholine receptor transport. In Xenopus laevis (African clawed frog), this protein is Cysteine-rich with EGF-like domain protein 2-B (creld2-b).